Here is a 180-residue protein sequence, read N- to C-terminus: Putative phycocyanobilin lyase CpcS 2 (180 aa).

This sequence belongs to the CpcS/CpeS biliprotein lyase family.

In terms of biological role, covalently attaches a chromophore to Cys residue(s) of phycobiliproteins (Potential). In vitro does not act as a chromophore lyase for ApcA1, ApcA2, ApcB, ApcD, ApcF, CpcB or PecB, the lyase activity is therefore unsure. This Nostoc sp. (strain PCC 7120 / SAG 25.82 / UTEX 2576) protein is Putative phycocyanobilin lyase CpcS 2 (cpeS2).